The following is a 352-amino-acid chain: Histidine biosynthesis bifunctional protein HisB (352 aa).

A histidinol-phosphatase region spans residues Met-1 to Phe-164. Asp-9 functions as the Nucleophile in the catalytic mechanism. Mg(2+) is bound by residues Asp-9 and Asp-11. The Proton donor role is filled by Asp-11. Cys-93, His-95, Cys-101, and Cys-103 together coordinate Zn(2+). Asp-130 is a Mg(2+) binding site. Positions Arg-165–Ile-352 are imidazoleglycerol-phosphate dehydratase.

In the N-terminal section; belongs to the histidinol-phosphatase family. It in the C-terminal section; belongs to the imidazoleglycerol-phosphate dehydratase family. Requires Mg(2+) as cofactor. It depends on Zn(2+) as a cofactor.

It localises to the cytoplasm. It catalyses the reaction D-erythro-1-(imidazol-4-yl)glycerol 3-phosphate = 3-(imidazol-4-yl)-2-oxopropyl phosphate + H2O. It carries out the reaction L-histidinol phosphate + H2O = L-histidinol + phosphate. The protein operates within amino-acid biosynthesis; L-histidine biosynthesis; L-histidine from 5-phospho-alpha-D-ribose 1-diphosphate: step 6/9. It functions in the pathway amino-acid biosynthesis; L-histidine biosynthesis; L-histidine from 5-phospho-alpha-D-ribose 1-diphosphate: step 8/9. This Campylobacter jejuni subsp. jejuni serotype O:2 (strain ATCC 700819 / NCTC 11168) protein is Histidine biosynthesis bifunctional protein HisB.